The sequence spans 186 residues: Acireductone dioxygenase (186 aa).

Residues 1-21 form a disordered region; sequence MSRLSIFPDGSTSMDQSSPTP. The span at 10–20 shows a compositional bias: polar residues; sequence GSTSMDQSSPT. Residues His103, His105, Glu109, and His147 each coordinate Fe(2+). Positions 103, 105, 109, and 147 each coordinate Ni(2+).

The protein belongs to the acireductone dioxygenase (ARD) family. In terms of assembly, monomer. Fe(2+) is required as a cofactor. Ni(2+) serves as cofactor.

It catalyses the reaction 1,2-dihydroxy-5-(methylsulfanyl)pent-1-en-3-one + O2 = 3-(methylsulfanyl)propanoate + CO + formate + 2 H(+). The catalysed reaction is 1,2-dihydroxy-5-(methylsulfanyl)pent-1-en-3-one + O2 = 4-methylsulfanyl-2-oxobutanoate + formate + 2 H(+). The protein operates within amino-acid biosynthesis; L-methionine biosynthesis via salvage pathway; L-methionine from S-methyl-5-thio-alpha-D-ribose 1-phosphate: step 5/6. In terms of biological role, catalyzes 2 different reactions between oxygen and the acireductone 1,2-dihydroxy-3-keto-5-methylthiopentene (DHK-MTPene) depending upon the metal bound in the active site. Fe-containing acireductone dioxygenase (Fe-ARD) produces formate and 2-keto-4-methylthiobutyrate (KMTB), the alpha-ketoacid precursor of methionine in the methionine recycle pathway. Ni-containing acireductone dioxygenase (Ni-ARD) produces methylthiopropionate, carbon monoxide and formate, and does not lie on the methionine recycle pathway. The chain is Acireductone dioxygenase from Synechococcus sp. (strain CC9902).